The primary structure comprises 492 residues: Glutamyl-tRNA(Gln) amidotransferase subunit A (492 aa).

Active-site charge relay system residues include Lys84 and Ser159. The Acyl-ester intermediate role is filled by Ser183.

It belongs to the amidase family. GatA subfamily. As to quaternary structure, heterotrimer of A, B and C subunits.

It carries out the reaction L-glutamyl-tRNA(Gln) + L-glutamine + ATP + H2O = L-glutaminyl-tRNA(Gln) + L-glutamate + ADP + phosphate + H(+). Functionally, allows the formation of correctly charged Gln-tRNA(Gln) through the transamidation of misacylated Glu-tRNA(Gln) in organisms which lack glutaminyl-tRNA synthetase. The reaction takes place in the presence of glutamine and ATP through an activated gamma-phospho-Glu-tRNA(Gln). This is Glutamyl-tRNA(Gln) amidotransferase subunit A from Anaeromyxobacter sp. (strain K).